Reading from the N-terminus, the 116-residue chain is NADH-ubiquinone oxidoreductase chain 3 (116 aa).

3 helical membrane-spanning segments follow: residues 3-23 (LITT…TISF), 56-76 (FFLI…LLPL), and 87-107 (LTLI…IYEW).

The protein belongs to the complex I subunit 3 family.

Its subcellular location is the mitochondrion membrane. It carries out the reaction a ubiquinone + NADH + 5 H(+)(in) = a ubiquinol + NAD(+) + 4 H(+)(out). In terms of biological role, core subunit of the mitochondrial membrane respiratory chain NADH dehydrogenase (Complex I) that is believed to belong to the minimal assembly required for catalysis. Complex I functions in the transfer of electrons from NADH to the respiratory chain. The immediate electron acceptor for the enzyme is believed to be ubiquinone. In Oncorhynchus keta (Chum salmon), this protein is NADH-ubiquinone oxidoreductase chain 3 (MT-ND3).